Reading from the N-terminus, the 941-residue chain is Endoplasmic reticulum aminopeptidase 1 (941 aa).

A topological domain (cytoplasmic) is located at residue methionine 1. A helical; Signal-anchor for type II membrane protein transmembrane segment spans residues valine 2–leucine 21. The Lumenal segment spans residues alanine 22–methionine 941. 2 N-linked (GlcNAc...) asparagine glycosylation sites follow: asparagine 70 and asparagine 154. Substrate is bound by residues glutamate 183 and glycine 317 to asparagine 321. Histidine 353 is a binding site for Zn(2+). Glutamate 354 acts as the Proton acceptor in catalysis. Positions 357 and 376 each coordinate Zn(2+). 2 cysteine pairs are disulfide-bonded: cysteine 404–cysteine 443 and cysteine 736–cysteine 743. Residue asparagine 414 is glycosylated (N-linked (GlcNAc...) asparagine). N-linked (GlcNAc...) asparagine glycosylation is found at asparagine 760 and asparagine 901.

This sequence belongs to the peptidase M1 family. As to quaternary structure, monomer. May also exist as a heterodimer; with ERAP2. Interacts with RBMX. Zn(2+) serves as cofactor. In terms of processing, N-glycosylated. As to expression, ubiquitous.

It is found in the endoplasmic reticulum membrane. Aminopeptidase that plays a central role in peptide trimming, a step required for the generation of most HLA class I-binding peptides. Peptide trimming is essential to customize longer precursor peptides to fit them to the correct length required for presentation on MHC class I molecules. Strongly prefers substrates 9-16 residues long. Rapidly degrades 13-mer to a 9-mer and then stops. Preferentially hydrolyzes the residue Leu and peptides with a hydrophobic C-terminus, while it has weak activity toward peptides with charged C-terminus. May play a role in the inactivation of peptide hormones. May be involved in the regulation of blood pressure through the inactivation of angiotensin II and/or the generation of bradykinin in the kidney. The polypeptide is Endoplasmic reticulum aminopeptidase 1 (ERAP1) (Homo sapiens (Human)).